A 244-amino-acid polypeptide reads, in one-letter code: Sperm-egg fusion protein Juno (244 aa).

The N-terminal stretch at Met-1 to Ala-19 is a signal peptide. Intrachain disulfides connect Cys-27-Cys-55, Cys-47-Cys-95, Cys-56-Cys-99, Cys-79-Cys-166, Cys-86-Cys-137, Cys-126-Cys-200, Cys-130-Cys-180, and Cys-143-Cys-160. Residues Trp-62–Leu-81 form an important for interaction with IZUMO1 region. Residue Asn-73 is glycosylated (N-linked (GlcNAc...) asparagine). Asn-185 carries N-linked (GlcNAc...) asparagine glycosylation. The GPI-anchor amidated glycine moiety is linked to residue Gly-222. Residues Ser-223–Pro-244 constitute a propeptide that is removed on maturation.

It belongs to the folate receptor family. In terms of assembly, monomer. Interacts with IZUMO1; the interaction is direct. IZUMO1 and IZUMO1R/JUNO form a complex with 1:1 stoichiometry. Interacts with WDR54. The protein is rapidly cleaved following fertilization, being only weakly detectable in zona-intact fertilized eggs at telophase II and undetectable at the pronuclear stage. Sheding is probably required to block to polyspermy and ensuring egg fusion with a single sperm. Widely expressed with higher expression in thymus, spleen and lung. Present at the cell surface of unfertilized oocytes, while it is barely detectable 30 to 40 minutes after fertilization (at protein level).

It is found in the cell membrane. Functionally, receptor for IZUMO1 present at the cell surface of oocytes (oolemma), which is essential for species-specific gamete recognition and fertilization. The IZUMO1:IZUMO1R/JUNO interaction is a necessary adhesion event between sperm and egg that is required for fertilization but is not sufficient for cell fusion. The ligand-receptor interaction probably does not act as a membrane 'fusogen'. Does not bind folate. This chain is Sperm-egg fusion protein Juno, found in Mus musculus (Mouse).